The following is a 527-amino-acid chain: Importin subunit alpha (527 aa).

The IBB domain maps to 1 to 58; sequence MSLRPNSRTEARRSRYKVAVDAEEGRRRREDNMVEIRKNKREENLLKKRREGLLQAQQ. 8 ARM repeats span residues 109–151, 152–196, 197–234, 235–279, 280–319, 320–362, 363–403, and 404–445; these read IEEV…TSEN, TKVV…YRDL, VLGH…RGKP, QPLF…DKIQ, AVIE…DDIQ, TQVM…NRNQ, IQIV…GGNH, and DQIK…KIGE.

This sequence belongs to the importin alpha family. Forms a complex with importin subunit beta-1.

It localises to the cytoplasm. Binds specifically and directly to substrates containing either a simple or bipartite NLS motif. Promotes docking of import substrates to the nuclear envelope. Seems to act as a cytosolic receptor for both simple and bipartite NLS motifs. The chain is Importin subunit alpha from Solanum lycopersicum (Tomato).